The following is a 319-amino-acid chain: tRNA (guanine-N(7)-)-methyltransferase (319 aa).

Residues Glu28, Glu51, and Asp75 each contribute to the S-adenosyl-L-methionine site. Residues Asp134 and 167-170 each bind substrate; that span reads TKYE.

The protein belongs to the class I-like SAM-binding methyltransferase superfamily. TrmB family.

It carries out the reaction guanosine(46) in tRNA + S-adenosyl-L-methionine = N(7)-methylguanosine(46) in tRNA + S-adenosyl-L-homocysteine. Its pathway is tRNA modification; N(7)-methylguanine-tRNA biosynthesis. Its function is as follows. Catalyzes the formation of N(7)-methylguanine at position 46 (m7G46) in tRNA. The sequence is that of tRNA (guanine-N(7)-)-methyltransferase from Coprothermobacter proteolyticus (strain ATCC 35245 / DSM 5265 / OCM 4 / BT).